The chain runs to 763 residues: F-box protein SKP2 (763 aa).

One can recognise an F-box domain in the interval 54-100 (KSSLMCLPTKVLLLILRTLDFNTLVTLCQVNSRFYNLITNEFLFQNV). At Thr594 the chain carries Phosphothreonine.

As to quaternary structure, interacts with SKP1. Component of the probable SCF(SKP2) complex containing CDC53, SKP1, RBX1 and SKP2. May interact with ribosomes.

The protein localises to the cytoplasm. Its pathway is protein modification; protein ubiquitination. In terms of biological role, substrate recognition component of a SCF (SKP1-CUL1-F-box protein) E3 ubiquitin-protein ligase complex which mediates the ubiquitination and subsequent proteasomal degradation of target proteins. Probably recognizes and binds to phosphorylated target proteins. Regulates protein levels of sulfur metabolism enzymes. The SCF(SKP2) complex may regulate some transcription factors or regulators of cysteine and methionine biosynthesis. This chain is F-box protein SKP2 (SKP2), found in Saccharomyces cerevisiae (strain ATCC 204508 / S288c) (Baker's yeast).